A 227-amino-acid chain; its full sequence is Cytochrome c oxidase subunit 2 (227 aa).

Topologically, residues 1 to 14 (MAYPFQLGLQDATS) are mitochondrial intermembrane. A helical transmembrane segment spans residues 15–45 (PIMEELTNFHDHTLMIVFLISSLVLYIISLM). The Mitochondrial matrix portion of the chain corresponds to 46–59 (LTTKLTHTSTMDAQ). Residues 60–87 (EVETIWTILPAVILILIALPSLRILYMM) traverse the membrane as a helical segment. Topologically, residues 88–227 (DEINNPVLTV…YFENWSASMI (140 aa)) are mitochondrial intermembrane. Residues His161, Cys196, Glu198, Cys200, His204, and Met207 each contribute to the Cu cation site. Glu198 is a Mg(2+) binding site. A Phosphotyrosine modification is found at Tyr218.

It belongs to the cytochrome c oxidase subunit 2 family. In terms of assembly, component of the cytochrome c oxidase (complex IV, CIV), a multisubunit enzyme composed of 14 subunits. The complex is composed of a catalytic core of 3 subunits MT-CO1, MT-CO2 and MT-CO3, encoded in the mitochondrial DNA, and 11 supernumerary subunits COX4I, COX5A, COX5B, COX6A, COX6B, COX6C, COX7A, COX7B, COX7C, COX8 and NDUFA4, which are encoded in the nuclear genome. The complex exists as a monomer or a dimer and forms supercomplexes (SCs) in the inner mitochondrial membrane with NADH-ubiquinone oxidoreductase (complex I, CI) and ubiquinol-cytochrome c oxidoreductase (cytochrome b-c1 complex, complex III, CIII), resulting in different assemblies (supercomplex SCI(1)III(2)IV(1) and megacomplex MCI(2)III(2)IV(2)). Found in a complex with TMEM177, COA6, COX18, COX20, SCO1 and SCO2. Interacts with TMEM177 in a COX20-dependent manner. Interacts with COX20. Interacts with COX16. The cofactor is Cu cation.

The protein localises to the mitochondrion inner membrane. The enzyme catalyses 4 Fe(II)-[cytochrome c] + O2 + 8 H(+)(in) = 4 Fe(III)-[cytochrome c] + 2 H2O + 4 H(+)(out). Component of the cytochrome c oxidase, the last enzyme in the mitochondrial electron transport chain which drives oxidative phosphorylation. The respiratory chain contains 3 multisubunit complexes succinate dehydrogenase (complex II, CII), ubiquinol-cytochrome c oxidoreductase (cytochrome b-c1 complex, complex III, CIII) and cytochrome c oxidase (complex IV, CIV), that cooperate to transfer electrons derived from NADH and succinate to molecular oxygen, creating an electrochemical gradient over the inner membrane that drives transmembrane transport and the ATP synthase. Cytochrome c oxidase is the component of the respiratory chain that catalyzes the reduction of oxygen to water. Electrons originating from reduced cytochrome c in the intermembrane space (IMS) are transferred via the dinuclear copper A center (CU(A)) of subunit 2 and heme A of subunit 1 to the active site in subunit 1, a binuclear center (BNC) formed by heme A3 and copper B (CU(B)). The BNC reduces molecular oxygen to 2 water molecules using 4 electrons from cytochrome c in the IMS and 4 protons from the mitochondrial matrix. In Rattus norvegicus (Rat), this protein is Cytochrome c oxidase subunit 2.